The primary structure comprises 614 residues: RNA polymerase sigma factor RpoD (614 aa).

The tract at residues 168 to 245 (DPDDNIAAPT…PEEKRSYPQG (78 aa)) is disordered. The span at 193 to 209 (EADDDEEESEGGDDEEE) shows a compositional bias: acidic residues. The span at 215 to 232 (TRSSQPSVSVRYPSSFSD) shows a compositional bias: polar residues. The sigma-70 factor domain-2 stretch occupies residues 380–450 (MVEANLRLVI…TRSIADQART (71 aa)). The short motif at 404 to 407 (DLIQ) is the Interaction with polymerase core subunit RpoC element. Residues 459–535 (ETINKLNRIS…DSTMQSPIYV (77 aa)) form a sigma-70 factor domain-3 region. Residues 548 to 601 (VLSGLTAREAKVLRMRFGIDMNTDHTLEEVGKQFDVTRERIRQIEAKAWRKLRH) form a sigma-70 factor domain-4 region. The H-T-H motif DNA-binding region spans 574–593 (LEEVGKQFDVTRERIRQIEA).

This sequence belongs to the sigma-70 factor family. RpoD/SigA subfamily. As to quaternary structure, interacts transiently with the RNA polymerase catalytic core.

It localises to the cytoplasm. Its function is as follows. Sigma factors are initiation factors that promote the attachment of RNA polymerase to specific initiation sites and are then released. This sigma factor is the primary sigma factor during exponential growth. The protein is RNA polymerase sigma factor RpoD of Pseudomonas putida (Arthrobacter siderocapsulatus).